We begin with the raw amino-acid sequence, 121 residues long: Small ribosomal subunit protein uS13 (121 aa).

Residues 89-121 are disordered; it reads MRHRRGLPVRGQHTKNNARTRKGKKVSIAGRKK.

Belongs to the universal ribosomal protein uS13 family. Part of the 30S ribosomal subunit. Forms a loose heterodimer with protein S19. Forms two bridges to the 50S subunit in the 70S ribosome.

Located at the top of the head of the 30S subunit, it contacts several helices of the 16S rRNA. In the 70S ribosome it contacts the 23S rRNA (bridge B1a) and protein L5 of the 50S subunit (bridge B1b), connecting the 2 subunits; these bridges are implicated in subunit movement. Contacts the tRNAs in the A and P-sites. The protein is Small ribosomal subunit protein uS13 of Pediococcus pentosaceus (strain ATCC 25745 / CCUG 21536 / LMG 10740 / 183-1w).